The following is a 264-amino-acid chain: Phosphonates import ATP-binding protein PhnC (264 aa).

Residues 7–254 (LSIRAASKTF…KLIDIYGPEF (248 aa)) enclose the ABC transporter domain. ATP is bound at residue 39–46 (GPSGSGKS).

The protein belongs to the ABC transporter superfamily. Phosphonates importer (TC 3.A.1.9.1) family. In terms of assembly, the complex is composed of two ATP-binding proteins (PhnC), two transmembrane proteins (PhnE) and a solute-binding protein (PhnD).

It is found in the cell inner membrane. It carries out the reaction phosphonate(out) + ATP + H2O = phosphonate(in) + ADP + phosphate + H(+). Its function is as follows. Part of the ABC transporter complex PhnCDE involved in phosphonates import. Responsible for energy coupling to the transport system. This chain is Phosphonates import ATP-binding protein PhnC, found in Caulobacter vibrioides (strain ATCC 19089 / CIP 103742 / CB 15) (Caulobacter crescentus).